A 460-amino-acid polypeptide reads, in one-letter code: Chromosomal replication initiator protein DnaA (460 aa).

The segment at 1 to 91 (MNLTSPKVST…SLWQSEDKSI (91 aa)) is domain I, interacts with DnaA modulators. The tract at residues 91-122 (IRSIDIQVIEERNSNFNVILKNREESNHNLGS) is domain II. A domain III, AAA+ region region spans residues 123 to 342 (PLDPRFTFDN…GALNKVTHTS (220 aa)). Residues glycine 169, glycine 171, lysine 172, and threonine 173 each coordinate ATP. Residues 343–460 (LIGRSMTVES…EINRLKKMFK (118 aa)) form a domain IV, binds dsDNA region.

This sequence belongs to the DnaA family. Oligomerizes as a right-handed, spiral filament on DNA at oriC.

It is found in the cytoplasm. In terms of biological role, plays an essential role in the initiation and regulation of chromosomal replication. ATP-DnaA binds to the origin of replication (oriC) to initiate formation of the DNA replication initiation complex once per cell cycle. Binds the DnaA box (a 9 base pair repeat at the origin) and separates the double-stranded (ds)DNA. Forms a right-handed helical filament on oriC DNA; dsDNA binds to the exterior of the filament while single-stranded (ss)DNA is stabiized in the filament's interior. The ATP-DnaA-oriC complex binds and stabilizes one strand of the AT-rich DNA unwinding element (DUE), permitting loading of DNA polymerase. After initiation quickly degrades to an ADP-DnaA complex that is not apt for DNA replication. Binds acidic phospholipids. The polypeptide is Chromosomal replication initiator protein DnaA (Wolbachia pipientis wMel).